The primary structure comprises 114 residues: Cytochrome b-c1 complex subunit 1, mitochondrial (114 aa).

At K31 the chain carries N6-acetyllysine.

Belongs to the peptidase M16 family. UQCRC1/QCR1 subfamily. In terms of assembly, component of the ubiquinol-cytochrome c oxidoreductase (cytochrome b-c1 complex, complex III, CIII), a multisubunit enzyme composed of 11 subunits. The complex is composed of 3 respiratory subunits cytochrome b, cytochrome c1 and Rieske protein UQCRFS1, 2 core protein subunits UQCRC1/QCR1 and UQCRC2/QCR2, and 6 low-molecular weight protein subunits UQCRH/QCR6, UQCRB/QCR7, UQCRQ/QCR8, UQCR10/QCR9, UQCR11/QCR10 and subunit 9, the cleavage product of Rieske protein UQCRFS1. The complex exists as an obligatory dimer and forms supercomplexes (SCs) in the inner mitochondrial membrane with NADH-ubiquinone oxidoreductase (complex I, CI) and cytochrome c oxidase (complex IV, CIV), resulting in different assemblies (supercomplex SCI(1)III(2)IV(1) and megacomplex MCI(2)III(2)IV(2)). Interacts with UQCC6. Interacts with STMP1.

It localises to the mitochondrion inner membrane. Functionally, component of the ubiquinol-cytochrome c oxidoreductase, a multisubunit transmembrane complex that is part of the mitochondrial electron transport chain which drives oxidative phosphorylation. The respiratory chain contains 3 multisubunit complexes succinate dehydrogenase (complex II, CII), ubiquinol-cytochrome c oxidoreductase (cytochrome b-c1 complex, complex III, CIII) and cytochrome c oxidase (complex IV, CIV), that cooperate to transfer electrons derived from NADH and succinate to molecular oxygen, creating an electrochemical gradient over the inner membrane that drives transmembrane transport and the ATP synthase. The cytochrome b-c1 complex catalyzes electron transfer from ubiquinol to cytochrome c, linking this redox reaction to translocation of protons across the mitochondrial inner membrane, with protons being carried across the membrane as hydrogens on the quinol. In the process called Q cycle, 2 protons are consumed from the matrix, 4 protons are released into the intermembrane space and 2 electrons are passed to cytochrome c. The 2 core subunits UQCRC1/QCR1 and UQCRC2/QCR2 are homologous to the 2 mitochondrial-processing peptidase (MPP) subunits beta-MPP and alpha-MPP respectively, and they seem to have preserved their MPP processing properties. May be involved in the in situ processing of UQCRFS1 into the mature Rieske protein and its mitochondrial targeting sequence (MTS)/subunit 9 when incorporated into complex III. Seems to play an important role in the maintenance of proper mitochondrial function in nigral dopaminergic neurons. The protein is Cytochrome b-c1 complex subunit 1, mitochondrial of Mesocricetus auratus (Golden hamster).